The sequence spans 244 residues: MNEKNIKHSQNFITSKHNIDKIMTNIRLNEHDNIFEIGSGKGHFTLELVQRCNFVTAIEIDHKLCKTTENKLVDHDNFQVLNKDILQFKFPKNQSYKIFGNIPYNISTDIIRKIVFDSIADEIYLIVEYGFAKRLLNTKRSLALFLMAEVDISILSMVPREYFHPKPKVNSSLIRLNRKKSRISHKDKQKYNYFVMKWVNKEYKKIFTKNQFNNSLKHAGIDDLNNISFEQFLSLFNSYKLFNK.

S-adenosyl-L-methionine-binding residues include Asn11, Ile13, Gly38, Glu59, Asp84, and Asn101.

It belongs to the class I-like SAM-binding methyltransferase superfamily. rRNA adenine N(6)-methyltransferase family.

It catalyses the reaction adenosine(2085) in 23S rRNA + 2 S-adenosyl-L-methionine = N(6)-dimethyladenosine(2085) in 23S rRNA + 2 S-adenosyl-L-homocysteine + 2 H(+). In terms of biological role, this protein produces a dimethylation of the adenine residue at position 2085 in 23S rRNA, resulting in reduced affinity between ribosomes and macrolide-lincosamide-streptogramin B antibiotics. In Bacillus subtilis, this protein is rRNA adenine N-6-methyltransferase (ermC').